A 203-amino-acid polypeptide reads, in one-letter code: MSKQPLRVGIGGPVGSGKTTLTLSLCNALRNRYNVAVVTNDIYTEEDAQFLVRHQALAQERIIGVETGGCPHTAIREDASINLEAVAQLSQRFSDLDLILVESGGDNLAATFSPELSDLTLYVIDVAAGEKIPRKGGPGICKSDLLIINKTDLAPLVGASLEVMDRDARKMRGERPFLFSNLKSGEGLDQIIDFIERQGLFKT.

Position 12-19 (12-19) interacts with GTP; the sequence is GPVGSGKT.

Belongs to the SIMIBI class G3E GTPase family. UreG subfamily. In terms of assembly, homodimer. UreD, UreF and UreG form a complex that acts as a GTP-hydrolysis-dependent molecular chaperone, activating the urease apoprotein by helping to assemble the nickel containing metallocenter of UreC. The UreE protein probably delivers the nickel.

It is found in the cytoplasm. Its function is as follows. Facilitates the functional incorporation of the urease nickel metallocenter. This process requires GTP hydrolysis, probably effectuated by UreG. The protein is Urease accessory protein UreG of Nitrosococcus oceani (strain ATCC 19707 / BCRC 17464 / JCM 30415 / NCIMB 11848 / C-107).